The primary structure comprises 486 residues: Serine/threonine-protein phosphatase 2A 56 kDa regulatory subunit alpha isoform (486 aa).

At Ser2 the chain carries N-acetylserine. The tract at residues 22-52 is disordered; it reads DGFTRKSVRKAQRQKRSQGSSQFRSQGSQAE. The segment covering 27-37 has biased composition (basic residues); sequence KSVRKAQRQKR. Low complexity predominate over residues 38 to 51; it reads SQGSSQFRSQGSQA. Ser41, Ser42, and Ser49 each carry phosphoserine.

Belongs to the phosphatase 2A regulatory subunit B56 family. In terms of assembly, PP2A consists of a common heterodimeric core enzyme, composed of a 36 kDa catalytic subunit (subunit C) and a 65 kDa constant regulatory subunit (PR65 or subunit A), that associates with a variety of regulatory subunits. Proteins that associate with the core dimer include three families of regulatory subunits B (the R2/B/PR55/B55, R3/B''/PR72/PR130/PR59 and R5/B'/B56 families), the 48 kDa variable regulatory subunit, viral proteins, and cell signaling molecules. Interacts with SGO1. As to expression, widely expressed with highest levels in thymus and ovary.

The protein localises to the cytoplasm. The protein resides in the nucleus. It is found in the chromosome. Its subcellular location is the centromere. In terms of biological role, the B regulatory subunit might modulate substrate selectivity and catalytic activity, and might also direct the localization of the catalytic enzyme to a particular subcellular compartment. This is Serine/threonine-protein phosphatase 2A 56 kDa regulatory subunit alpha isoform (Ppp2r5a) from Mus musculus (Mouse).